A 127-amino-acid chain; its full sequence is Fluoride-specific ion channel FluC (127 aa).

2 helical membrane-spanning segments follow: residues 4–24 (WFWI…LSTW) and 36–56 (GTLA…EIAA). Na(+) contacts are provided by G75 and T78. The helical transmembrane segment at 100 to 120 (LANIAITLVVCLLAGVLGMVV) threads the bilayer.

This sequence belongs to the fluoride channel Fluc/FEX (TC 1.A.43) family.

It is found in the cell inner membrane. The enzyme catalyses fluoride(in) = fluoride(out). Its activity is regulated as follows. Na(+) is not transported, but it plays an essential structural role and its presence is essential for fluoride channel function. Functionally, fluoride-specific ion channel. Important for reducing fluoride concentration in the cell, thus reducing its toxicity. The sequence is that of Fluoride-specific ion channel FluC from Sorangium cellulosum (strain So ce56) (Polyangium cellulosum (strain So ce56)).